The primary structure comprises 337 residues: Large ribosomal subunit protein uL3 (337 aa).

A disordered region spans residues 1–29; the sequence is MPKINRPRRGSLAFSPRKRAQSPIPKYKS.

The protein belongs to the universal ribosomal protein uL3 family. As to quaternary structure, part of the 50S ribosomal subunit. Forms a cluster with proteins L14 and L24e.

Functionally, one of the primary rRNA binding proteins, it binds directly near the 3'-end of the 23S rRNA, where it nucleates assembly of the 50S subunit. This is Large ribosomal subunit protein uL3 from Methanoregula boonei (strain DSM 21154 / JCM 14090 / 6A8).